Consider the following 420-residue polypeptide: Zinc finger and BTB domain-containing protein 42 (420 aa).

The BTB domain occupies 24 to 92 (CDCTVLVGDA…MYEGRLDLHN (69 aa)). Disordered stretches follow at residues 127 to 204 (TRTL…HPPC) and 222 to 247 (VKAE…PPPV). The span at 227–241 (DSFSEQDSSSPQSAD) shows a compositional bias: low complexity. 4 C2H2-type zinc fingers span residues 292-314 (CICP…LSAH), 332-354 (PTCP…ERTH), 360-382 (YTCV…AVVH), and 388-411 (HACR…RKFH).

The protein belongs to the krueppel C2H2-type zinc-finger protein family. ZBTB18 subfamily. In terms of tissue distribution, highly expressed in skeletal muscle and ovary (at protein level). Low expression in brain, lung, spleen, liver and heart (at protein level). Not detected in kidney and intestines (at protein level). Also observed in testis and, at lower levels, in stomach and nervous system.

Its subcellular location is the cytoplasm. The protein resides in the nucleus. It is found in the nucleoplasm. Transcriptional repressor. Specifically binds DNA and probably acts by recruiting chromatin remodeling multiprotein complexes. This is Zinc finger and BTB domain-containing protein 42 (Zbtb42) from Mus musculus (Mouse).